The primary structure comprises 103 residues: MSAVRIKKGDTVKVIAGKDKGKEGKVLSVNAKNHTALVEGVNMVTKHAKPSAANQQGGILHQEAPIDISNIAYSLKGKETKIGYDFKDGKKVRVAKATGEVID.

The protein belongs to the universal ribosomal protein uL24 family. In terms of assembly, part of the 50S ribosomal subunit.

Its function is as follows. One of two assembly initiator proteins, it binds directly to the 5'-end of the 23S rRNA, where it nucleates assembly of the 50S subunit. In terms of biological role, one of the proteins that surrounds the polypeptide exit tunnel on the outside of the subunit. The sequence is that of Large ribosomal subunit protein uL24 from Lachnospira eligens (strain ATCC 27750 / DSM 3376 / VPI C15-48 / C15-B4) (Eubacterium eligens).